The primary structure comprises 1291 residues: Vacuolating cytotoxin autotransporter (1291 aa).

Residues 1-33 form the signal peptide; it reads MEIQQTHRKINRPLVSLALVGALVSITPQQSHA. Residues 326-374 form a disordered region; that stretch reads PPEGGYKDKPNDKPSNTTQNNAKNDKQESSQNNSNTQVINPPNSAQKTE. Polar residues-rich tracts occupy residues 338-347 and 354-374; these read KPSNTTQNNA and SSQNNSNTQVINPPNSAQKTE. In terms of domain architecture, Autotransporter spans 1018–1291; it reads KYEKPTNVWA…ASNLGMRYSF (274 aa).

Its subcellular location is the periplasm. The protein resides in the secreted. The protein localises to the cell surface. It is found in the cell outer membrane. Induces vacuolation of eukaryotic cells. Causes ulceration and gastric lesions. This is Vacuolating cytotoxin autotransporter (vacA) from Helicobacter pylori (Campylobacter pylori).